A 630-amino-acid chain; its full sequence is Vacuolar protein 8 (630 aa).

Glycine 2 is lipidated: N-myristoyl glycine. ARM repeat units lie at residues 74–115, 117–156, 158–197, 199–238, 242–281, 283–322, 324–364, 408–447, and 456–495; these read EITE…NLAV, AENK…NLAT, DENK…NMTH, DENR…NIAV, NRKK…NLAS, SKYQ…NVSI, PANE…NLAA, DDLK…NLSS, and FNAV…QLLE. 2 disordered regions span residues 519–558 and 572–630; these read AKSP…EGEG and EVGE…GRDR. The segment covering 543 to 558 has biased composition (acidic residues); that stretch reads SEDEFEDGLTDQEGEG. Residues 598-607 are compositionally biased toward polar residues; that stretch reads GQGQTSQVGS.

Belongs to the beta-catenin family.

The protein localises to the vacuole membrane. In terms of biological role, functions in both vacuole inheritance and protein targeting from the cytoplasm to vacuole. In Cryptococcus neoformans var. neoformans serotype D (strain B-3501A) (Filobasidiella neoformans), this protein is Vacuolar protein 8 (VAC8).